A 455-amino-acid chain; its full sequence is Probable glycine dehydrogenase (decarboxylating) subunit 1 (455 aa).

This sequence belongs to the GcvP family. N-terminal subunit subfamily. The glycine cleavage system is composed of four proteins: P, T, L and H. In this organism, the P 'protein' is a heterodimer of two subunits.

It catalyses the reaction N(6)-[(R)-lipoyl]-L-lysyl-[glycine-cleavage complex H protein] + glycine + H(+) = N(6)-[(R)-S(8)-aminomethyldihydrolipoyl]-L-lysyl-[glycine-cleavage complex H protein] + CO2. The glycine cleavage system catalyzes the degradation of glycine. The P protein binds the alpha-amino group of glycine through its pyridoxal phosphate cofactor; CO(2) is released and the remaining methylamine moiety is then transferred to the lipoamide cofactor of the H protein. In Saccharolobus islandicus (strain Y.N.15.51 / Yellowstone #2) (Sulfolobus islandicus), this protein is Probable glycine dehydrogenase (decarboxylating) subunit 1.